The sequence spans 214 residues: Auxin-binding protein ABP20 (214 aa).

The N-terminal stretch at 1–23 (MPQATMIFPILFTFFLLLSSSNA) is a signal peptide. A disulfide bridge connects residues C29 and C44. Residues 58–204 (SGLGIAGNTS…TTFLDAAQIK (147 aa)) enclose the Cupin type-1 domain. An N-linked (GlcNAc...) asparagine glycan is attached at N65. 4 residues coordinate Mn(2+): H106, H108, E113, and H152.

The protein belongs to the germin family. In terms of assembly, interacts with ABP19.

The protein localises to the secreted. It localises to the extracellular space. It is found in the apoplast. Its subcellular location is the cell wall. Functionally, probable receptor for the plant growth-promoting hormone auxin. This chain is Auxin-binding protein ABP20 (ABP20), found in Prunus persica (Peach).